A 343-amino-acid chain; its full sequence is N-acetyl-gamma-glutamyl-phosphate reductase (343 aa).

Residue cysteine 147 is part of the active site.

It belongs to the NAGSA dehydrogenase family. Type 1 subfamily.

Its subcellular location is the cytoplasm. It catalyses the reaction N-acetyl-L-glutamate 5-semialdehyde + phosphate + NADP(+) = N-acetyl-L-glutamyl 5-phosphate + NADPH + H(+). It functions in the pathway amino-acid biosynthesis; L-arginine biosynthesis; N(2)-acetyl-L-ornithine from L-glutamate: step 3/4. Its function is as follows. Catalyzes the NADPH-dependent reduction of N-acetyl-5-glutamyl phosphate to yield N-acetyl-L-glutamate 5-semialdehyde. This is N-acetyl-gamma-glutamyl-phosphate reductase from Listeria welshimeri serovar 6b (strain ATCC 35897 / DSM 20650 / CCUG 15529 / CIP 8149 / NCTC 11857 / SLCC 5334 / V8).